We begin with the raw amino-acid sequence, 398 residues long: MSLELSSNESEDNFRDELVDISGQVSKKPINIDSRQVRLILDHTAFVRGIGNIKRWFNEEYINSNTTRSNEIINLNIYIPTYTLHEFDFVKKGTSISATNAREAIRFIDNYLENEVEMNSDKIQYNLILESPQDNVPSWNKCNHYKVHSPKIKEFPNYKTKFDSSLIGQTPNVNEDSEFNENFDNALTFNQRNKLNDIQYENSASYQNAIANSDNLAEMPVRLRYLIRSCIYKRFIETKKPKIKNEIEDWKLVTEDPITKIWAKSYGIDCLNVNEAELLIFQNYDVNSFRLYNPYANDGDDFDPSTNILQNTIDTTLYSYSSVQDEPVTSNYRGKNNRGRNNRGRRGNKRRERERWPLSTDAVVSEERNESGTGFIKKEKFGAINYAPRGQGELWRPG.

The interval 327-355 is disordered; sequence PVTSNYRGKNNRGRNNRGRRGNKRRERER. Over residues 335-350 the composition is skewed to basic residues; it reads KNNRGRNNRGRRGNKR.

Its subcellular location is the cytoplasm. Involved in nonsense-mediated decay of mRNAs containing premature stop codons. The polypeptide is Nonsense-mediated decay protein 4 (NMD4) (Candida albicans (strain SC5314 / ATCC MYA-2876) (Yeast)).